The primary structure comprises 745 residues: MVGEMTNNGRIRPSFPVKDLTSNEGSEYGGPVEFTREDVETLLHERIKYKSKYNYKERCENTMDYVKRLRLCIRWFQELELDYAFEQEKLKNAMEMNEKHCADLEVNLKVKEEELNMVIDELRKNFASVQVQLAKEQTEKLAANESLGKEREARIAVESLQAAITEELAKTQGELQTANQRIQAVNDMYKLLQEYNSSLQLYNSKLQGDLDEAHENIKRGEKERTGIVESIGNLKGQFKALQDQLAASKVSQDDVMKQKDELVNEIVSLKVEIQQVKDDRDRHITEIETLQAEATKQNDFKDTINELESKCSVQNKEIEELQDQLVASERKLQVADLSTFEKMNEFEEQKESIMELKGRLEEAELKLIEGEKLRKKLHNTIQELKGNIRVFCRVRPLLSGENSSEEAKTISYPTSLEALGRGIDLLQNGQSHCFTFDKVFVPSASQEDVFVEISQLVQSALDGYKVCIFAYGQTGSGKTYTMMGRPGNPDEKGLIPRCLEQIFQTRQSLRSQGWKYELQVSMLEIYNETIRDLLSTNKEAVRADNGVSPQKYAIKHDASGNTHVVELTVVDVRSSKQVSFLLDHAARNRSVGKTAMNEQSSRSHFVFTLKISGFNESTEQQVQGVLNLIDLAGSERLSKSGSTGDRLKETQAINKSLSSLGDVIFALAKKEDHVPFRNSKLTYLLQPCLGGDSKTLMFVNITPEPSSTGESLCSLRFAARVNACEIGTAHRHVNARPLDYRLSLG.

The disordered stretch occupies residues 1–31 (MVGEMTNNGRIRPSFPVKDLTSNEGSEYGGP). The globular stretch occupies residues 1 to 35 (MVGEMTNNGRIRPSFPVKDLTSNEGSEYGGPVEFT). Microtubule-binding regions lie at residues 65 to 77 (YVKR…RWFQ) and 198 to 745 (SLQL…LSLG). 2 coiled-coil regions span residues 76-223 (FQEL…GEKE) and 259-389 (KDEL…GNIR). One can recognise a Kinesin motor domain in the interval 387 to 724 (NIRVFCRVRP…LRFAARVNAC (338 aa)). Residue 472–479 (GQTGSGKT) coordinates ATP.

It belongs to the TRAFAC class myosin-kinesin ATPase superfamily. Kinesin family. KIN-14 subfamily. In terms of assembly, bind to microtubules in an ATP-insensitive manner (in vitro). Homodimer and heterodimer with KIN14N/KATC (in vitro).

It localises to the cytoplasm. The protein localises to the cytoskeleton. The protein is Kinesin-like protein KIN-14M of Arabidopsis thaliana (Mouse-ear cress).